Here is an 861-residue protein sequence, read N- to C-terminus: Glucans biosynthesis glucosyltransferase H (861 aa).

Disordered regions lie at residues 65–89 (RLSA…SVGR) and 101–129 (AGEP…SMVP). 2 stretches are compositionally biased toward basic and acidic residues: residues 67–76 (SAREPAKGET) and 105–114 (LLKRRPDGTV). The next 6 membrane-spanning stretches (helical) occupy residues 181-201 (FLLG…TKVL), 208-228 (LLEI…SAGF), 532-552 (VFLT…FLLL), 589-609 (LFSA…LLLV), 616-636 (GGLP…ALLA), and 698-718 (FVLW…LSVM).

It belongs to the glycosyltransferase 2 family. OpgH subfamily.

Its subcellular location is the cell inner membrane. It functions in the pathway glycan metabolism; osmoregulated periplasmic glucan (OPG) biosynthesis. In terms of biological role, involved in the biosynthesis of osmoregulated periplasmic glucans (OPGs). This is Glucans biosynthesis glucosyltransferase H from Cupriavidus pinatubonensis (strain JMP 134 / LMG 1197) (Cupriavidus necator (strain JMP 134)).